A 295-amino-acid chain; its full sequence is Nucleotide-binding protein Sare_3328 (295 aa).

19 to 26 (GVSGGGRS) provides a ligand contact to ATP. Position 70-73 (70-73 (DVRS)) interacts with GTP.

It belongs to the RapZ-like family.

Displays ATPase and GTPase activities. The sequence is that of Nucleotide-binding protein Sare_3328 from Salinispora arenicola (strain CNS-205).